Reading from the N-terminus, the 106-residue chain is Prothymosin alpha-B (106 aa).

Residues 1–39 are compositionally biased toward basic and acidic residues; it reads MADAKVDSATEISAKDLKEKKLIEEKENGKDATNGKENE. The interval 1-106 is disordered; that stretch reads MADAKVDSAT…DVDPKKQKVN (106 aa). Phosphoserine is present on serine 8. Threonine 10 is subject to Phosphothreonine. Acidic residues-rich tracts occupy residues 40-76 and 85-98; these read ENGE…DEDL and DDDE…EDDV.

It belongs to the pro/parathymosin family. In terms of tissue distribution, uniformly expressed in all embryonic cells at 4 and 8 hpf. At the 20-somite stage (18 hpf), ubiquitously expressed in the developing nervous system, in the tail bud and in the pronephric ducts. Also expressed in some placodes, including the anterior lateral line placode, otic vesicle and olfactory placode. At 27 hpf, strong expression persists in the central nervous system and the olfactory placode. Expressed strongly in the eyes and the pectoral fin buds. In the tail region, expressed in the spinal cord, in the posterior lateral line precursors, and persists in the pronephric ducts. At 48 hpf, expressed in all head territories including the developing brain, eyes, and pharyngeal arches. More caudally, expression persists in the pectoral fin buds, the spinal cord and, for the first time, appears in the intestine. At 72 hpf, expressed only in restricted regions of the brain, in pharyngeal arches region and in the amacrine cells and the horizontal cells of the retina.

The protein resides in the nucleus. The protein is Prothymosin alpha-B of Danio rerio (Zebrafish).